The primary structure comprises 141 residues: MSLIRCTTSKALKFRQLLKMAARTSVTTPVSREPFSIEDHSLHFKIERYWAAGMIPLIPTAYFIHTPAMDAVLTVAIVLHVHWGIAGVVSDYARPFVIGDTLARVARASVYIITVILLASLLHFNNSDVGLTKAFEMVWSL.

A mitochondrion-targeting transit peptide spans 1–24 (MSLIRCTTSKALKFRQLLKMAART). The Mitochondrial matrix segment spans residues 25–44 (SVTTPVSREPFSIEDHSLHF). Residues 45-63 (KIERYWAAGMIPLIPTAYF) form a helical membrane-spanning segment. Residues 64–68 (IHTPA) lie on the Mitochondrial intermembrane side of the membrane. A helical membrane pass occupies residues 69 to 89 (MDAVLTVAIVLHVHWGIAGVV). H80 contributes to the heme b binding site. The Mitochondrial matrix portion of the chain corresponds to 90–104 (SDYARPFVIGDTLAR). An a ubiquinone-binding site is contributed by Y92. Residues 105–126 (VARASVYIITVILLASLLHFNN) traverse the membrane as a helical segment. The Mitochondrial intermembrane segment spans residues 127-141 (SDVGLTKAFEMVWSL).

The protein belongs to the CybS family. As to quaternary structure, component of the mitochondrial electron transport chain complex II composed of four subunits: a flavoprotein (Fp), an iron-sulfur protein (Ip), and a large cytochrome b (CybL) subunit and a small cytochrome b (CybS) subunit. There are 2 developmental stage-specific forms of complex II which have the Ip and CybL subunits in common. Complex II from the free-living larvae (aerobic environment) acts as a succinate dehydrogenase and is composed of the common subunit Ip and CybL and the stage specific subunits FpL and CybSL. Complex II from parasitic larvae and adults (anaerobic environment) acts as a fumarate reductase and is composed of the common subunit Ip and CybL and the stage specific subunits FpA and CybSA. Requires heme b as cofactor.

It is found in the mitochondrion inner membrane. It participates in carbohydrate metabolism; tricarboxylic acid cycle; fumarate from succinate (eukaryal route): step 1/1. Functionally, membrane-bound small subunit (CybS) of the mitochondrial electron transport chain complex II, which together with the membrane-bound large subunit (CybL), anchor the catalytic subunits to the inner mitochondria membrane. During the free-living egg-larvae stages, which occur in an aerobic environment, complex II acts as a succinate dehydrogenase by transferring electrons from succinate to ubiquinone. The protein is Succinate dehydrogenase [ubiquinone] cytochrome b small subunit 2 of Ascaris suum (Pig roundworm).